Here is a 426-residue protein sequence, read N- to C-terminus: Serine--tRNA ligase (426 aa).

230-232 (TAE) is a binding site for L-serine. Position 261 to 263 (261 to 263 (RSE)) interacts with ATP. An L-serine-binding site is contributed by E284. 348–351 (EISS) serves as a coordination point for ATP. S384 contributes to the L-serine binding site.

The protein belongs to the class-II aminoacyl-tRNA synthetase family. Type-1 seryl-tRNA synthetase subfamily. As to quaternary structure, homodimer. The tRNA molecule binds across the dimer.

The protein resides in the cytoplasm. The catalysed reaction is tRNA(Ser) + L-serine + ATP = L-seryl-tRNA(Ser) + AMP + diphosphate + H(+). It catalyses the reaction tRNA(Sec) + L-serine + ATP = L-seryl-tRNA(Sec) + AMP + diphosphate + H(+). It participates in aminoacyl-tRNA biosynthesis; selenocysteinyl-tRNA(Sec) biosynthesis; L-seryl-tRNA(Sec) from L-serine and tRNA(Sec): step 1/1. Its function is as follows. Catalyzes the attachment of serine to tRNA(Ser). Is also able to aminoacylate tRNA(Sec) with serine, to form the misacylated tRNA L-seryl-tRNA(Sec), which will be further converted into selenocysteinyl-tRNA(Sec). This chain is Serine--tRNA ligase, found in Streptococcus mutans serotype c (strain ATCC 700610 / UA159).